A 206-amino-acid polypeptide reads, in one-letter code: Imidazoleglycerol-phosphate dehydratase (206 aa).

This sequence belongs to the imidazoleglycerol-phosphate dehydratase family.

The protein resides in the cytoplasm. The catalysed reaction is D-erythro-1-(imidazol-4-yl)glycerol 3-phosphate = 3-(imidazol-4-yl)-2-oxopropyl phosphate + H2O. The protein operates within amino-acid biosynthesis; L-histidine biosynthesis; L-histidine from 5-phospho-alpha-D-ribose 1-diphosphate: step 6/9. This Mycolicibacterium smegmatis (strain ATCC 700084 / mc(2)155) (Mycobacterium smegmatis) protein is Imidazoleglycerol-phosphate dehydratase.